Consider the following 582-residue polypeptide: MARKRGISSLLLIYKQSFVIWGALLIFSPLLMFVGDSHGLQAKCLYCVAVMGSYWVFEALPLAITAFIPMILFPLFGIMRSEEVARAYLPDTCFLFMGGLMVALAVEKCELHARVALFVLKTVGSEPARVMAGFMGVTGFLSMWISNTATTALMVPILQSVITELVSNHRMEDLVALCEAHHNSSRKHSVGMRRLSLPNENNEIKREEMDTAMSPREQKMAKGLMLSVCFSANIGGAATITGTASNLVLVGQLNELFPGADTGVNFLSWLIFAFPMVFCCLIYCWCVLYLLYLRDAPKGSIIVTRKLQQKYNELHAFSFAEMAVIFCFALLLVLWILREPQVVPGWGEMFKDEFVSDATSAMFIVILLFTLPEKLPSSRGSSEQRKASSGLLDWATVQDRFPWSVLFLLGGGFALAAGVKESGLSHDIGAIMRYLDVFNHNIIMLICIIISVTLTNVCSNTVIASIFIPIVAELARSLEIDPLNFMLPVTISASFAFLLPVATPPNAIVFSSGYLKVFDMFVSGLCVTLGCVVLSMLNMLLWAGFVFNLHLFPQWAANPSPPLDVQDWAVENNITFVGTSKL.

12 consecutive transmembrane segments (helical) span residues 17–37 (SFVI…VGDS), 59–79 (ALPL…FGIM), 87–107 (AYLP…LAVE), 130–150 (VMAG…NTAT), 224–244 (LMLS…TGTA), 271–291 (IFAF…LYLL), 317–337 (FSFA…LWIL), 353–373 (EFVS…TLPE), 401–421 (FPWS…GVKE), 455–475 (TNVC…AELA), 482–502 (PLNF…LPVA), and 527–547 (VTLG…GFVF).

Belongs to the SLC13A/DASS transporter (TC 2.A.47) family. NADC subfamily. As to expression, nad-1 and nad-2 are coexpressed in the intestinal tract from early larvae to adults, expression is from the pharynx through to the anus. Expression level is significantly greater in the anterior half of the intestine than in the posterior half.

The protein localises to the membrane. In terms of biological role, low affinity sodium-dicarboxylate cotransporter that accepts a range of tricarboxylic acid-cycle intermediates with 4-5 carbon atoms. There is no interaction with monocarboxylates. In Caenorhabditis elegans, this protein is Sodium-dependent low-affinity dicarboxylate transporter 1 (nac-1).